The following is a 225-amino-acid chain: Uridylate kinase (225 aa).

9–10 contributes to the ATP binding site; it reads GS. Gly-43 contributes to the UMP binding site. ATP contacts are provided by Gly-44 and Arg-48. Residues Asp-65 and 113-119 each bind UMP; that span reads TEPAHST. The ATP site is built by Thr-139, Tyr-145, and Asp-148.

This sequence belongs to the UMP kinase family. Homohexamer.

It is found in the cytoplasm. It catalyses the reaction UMP + ATP = UDP + ADP. It participates in pyrimidine metabolism; CTP biosynthesis via de novo pathway; UDP from UMP (UMPK route): step 1/1. Inhibited by UTP. Its function is as follows. Catalyzes the reversible phosphorylation of UMP to UDP. The chain is Uridylate kinase from Methanobrevibacter smithii (strain ATCC 35061 / DSM 861 / OCM 144 / PS).